Consider the following 162-residue polypeptide: UPF0114 protein PSEEN0819 (162 aa).

3 consecutive transmembrane segments (helical) span residues 15–35 (LLAPIYFGLSLGLLALALKFF), 53–73 (LVLVILSLIDMSLVGGLLVMV), and 136–156 (LMWYVIIHMTFVVSAFVMGYL).

Belongs to the UPF0114 family.

It localises to the cell membrane. This chain is UPF0114 protein PSEEN0819, found in Pseudomonas entomophila (strain L48).